The primary structure comprises 109 residues: MNSENSKITFKPNILIKGVYIFVLYGMCICIVKNYFKTQLFQLLAPAIHEKSKNNIFMIASDSFPNLYKQNTNYRPAHPLSVASKLPTLLAWLPNRSPLHFQLIWLPIF.

Residues 12–32 (PNILIKGVYIFVLYGMCICIV) form a helical membrane-spanning segment.

It localises to the membrane. This is an uncharacterized protein from Saccharomyces cerevisiae (strain ATCC 204508 / S288c) (Baker's yeast).